A 598-amino-acid chain; its full sequence is Aspartate--tRNA(Asp/Asn) ligase (598 aa).

Position 173 (glutamate 173) interacts with L-aspartate. Residues 197 to 200 are aspartate; that stretch reads QLFK. Residue arginine 219 coordinates L-aspartate. ATP is bound by residues 219–221 and glutamine 228; that span reads RDE. An L-aspartate-binding site is contributed by histidine 448. Residue glutamate 482 participates in ATP binding. Arginine 489 is a binding site for L-aspartate. 534 to 537 serves as a coordination point for ATP; sequence GWDR. Residues 560-598 are disordered; that stretch reads GYDPLTAAPAPITAQQRKEAGVDAKPETKKAAAGEPAGA. Residues 575–591 are compositionally biased toward basic and acidic residues; sequence QRKEAGVDAKPETKKAA.

The protein belongs to the class-II aminoacyl-tRNA synthetase family. Type 1 subfamily. Homodimer.

It is found in the cytoplasm. It carries out the reaction tRNA(Asx) + L-aspartate + ATP = L-aspartyl-tRNA(Asx) + AMP + diphosphate. In terms of biological role, aspartyl-tRNA synthetase with relaxed tRNA specificity since it is able to aspartylate not only its cognate tRNA(Asp) but also tRNA(Asn). Reaction proceeds in two steps: L-aspartate is first activated by ATP to form Asp-AMP and then transferred to the acceptor end of tRNA(Asp/Asn). This chain is Aspartate--tRNA(Asp/Asn) ligase, found in Kineococcus radiotolerans (strain ATCC BAA-149 / DSM 14245 / SRS30216).